The primary structure comprises 539 residues: Glucose-6-phosphate isomerase (539 aa).

E349 functions as the Proton donor in the catalytic mechanism. Residues H380 and K508 contribute to the active site. Residues 519-539 are disordered; it reads ESGASGQHDPSTAGLIQRLKR.

It belongs to the GPI family.

The protein localises to the cytoplasm. The catalysed reaction is alpha-D-glucose 6-phosphate = beta-D-fructose 6-phosphate. Its pathway is carbohydrate biosynthesis; gluconeogenesis. It functions in the pathway carbohydrate degradation; glycolysis; D-glyceraldehyde 3-phosphate and glycerone phosphate from D-glucose: step 2/4. Functionally, catalyzes the reversible isomerization of glucose-6-phosphate to fructose-6-phosphate. This Caulobacter vibrioides (strain ATCC 19089 / CIP 103742 / CB 15) (Caulobacter crescentus) protein is Glucose-6-phosphate isomerase.